The primary structure comprises 193 residues: Large ribosomal subunit protein uL18 (193 aa).

This sequence belongs to the universal ribosomal protein uL18 family. As to quaternary structure, part of the 50S ribosomal subunit. Contacts the 5S and 23S rRNAs.

This is one of the proteins that bind and probably mediate the attachment of the 5S RNA into the large ribosomal subunit, where it forms part of the central protuberance. This is Large ribosomal subunit protein uL18 from Methanococcus maripaludis (strain C6 / ATCC BAA-1332).